A 74-amino-acid chain; its full sequence is Guanine nucleotide-binding protein G(T) subunit gamma-T1 (74 aa).

Position 71 is a cysteine methyl ester (C71). A lipid anchor (S-farnesyl cysteine) is attached at C71. Residues 72–74 (VIS) constitute a propeptide, removed in mature form.

It belongs to the G protein gamma family. In terms of assembly, g proteins are composed of 3 units, alpha, beta and gamma. Retinal rod outer segment.

It localises to the cell membrane. Functionally, guanine nucleotide-binding proteins (G proteins) are involved as a modulator or transducer in various transmembrane signaling systems. The beta and gamma chains are required for the GTPase activity, for replacement of GDP by GTP, and for G protein-effector interaction. The polypeptide is Guanine nucleotide-binding protein G(T) subunit gamma-T1 (Gngt1) (Mus musculus (Mouse)).